The sequence spans 525 residues: Protein disulfide-isomerase A2 (525 aa).

The N-terminal stretch at 1–21 (MSCQLLPVLLLLLLRASCPWG) is a signal peptide. Positions 27 to 152 (RSPSEEPPEE…IAEWLRRRVG (126 aa)) constitute a Thioredoxin 1 domain. Residues C71 and C74 each act as nucleophile in the active site. A disulfide bridge links C71 with C74. Residues N127 and N284 are each glycosylated (N-linked (GlcNAc...) asparagine). A Thioredoxin 2 domain is found at 367-496 (VLNGQVKPYL…FSKFLDNGGV (130 aa)). Active-site nucleophile residues include C418 and C421. A disulfide bridge links C418 with C421. The interval 498 to 525 (PTEEPLEEPAAPFPEPPANSTMGSKEEL) is disordered. N-linked (GlcNAc...) asparagine glycosylation occurs at N516. A compositionally biased stretch (polar residues) spans 516–525 (NSTMGSKEEL). The short motif at 522-525 (KEEL) is the Prevents secretion from ER element.

This sequence belongs to the protein disulfide isomerase family. Monomer; predominantly as monomer under reducing conditions. Homodimer; disulfide-linked. Part of a large chaperone multiprotein complex comprising DNAJB11, HSP90B1, HSPA5, HYOU, PDIA2, PDIA4, PDIA6, PPIB, SDF2L1, UGGT1 and very small amounts of ERP29, but not, or at very low levels, CALR nor CANX. The disulfide-linked homodimer exhibits an enhanced chaperone activity. In terms of processing, glycosylated.

The protein resides in the endoplasmic reticulum lumen. The catalysed reaction is Catalyzes the rearrangement of -S-S- bonds in proteins.. In terms of biological role, acts as an intracellular estrogen-binding protein. May be involved in modulating cellular levels and biological functions of estrogens in the pancreas. May act as a chaperone that inhibits aggregation of misfolded proteins. The chain is Protein disulfide-isomerase A2 (PDIA2) from Pongo abelii (Sumatran orangutan).